Here is a 23-residue protein sequence, read N- to C-terminus: GCRQCGGGCNKHGKCINGKCKCY.

3 disulfide bridges follow: cysteine 2–cysteine 15, cysteine 5–cysteine 20, and cysteine 9–cysteine 22. Positions glycine 13–cysteine 20 are interaction with Ca(2+)-activated K(+) channels. Tyrosine amide is present on tyrosine 23.

Expressed by the venom gland.

Its subcellular location is the secreted. Blocks the potassium channel Shaker B. This chain is Potassium channel toxin alpha-KTx 13.4, found in Tityus stigmurus (Brazilian scorpion).